Here is a 356-residue protein sequence, read N- to C-terminus: Peptide chain release factor 1 (356 aa).

Position 233 is an N5-methylglutamine (Q233).

It belongs to the prokaryotic/mitochondrial release factor family. In terms of processing, methylated by PrmC. Methylation increases the termination efficiency of RF1.

Its subcellular location is the cytoplasm. Peptide chain release factor 1 directs the termination of translation in response to the peptide chain termination codons UAG and UAA. This chain is Peptide chain release factor 1, found in Shouchella clausii (strain KSM-K16) (Alkalihalobacillus clausii).